The chain runs to 248 residues: Protein GrpE (248 aa).

Residues 229–248 are disordered; sequence AAPKEDTLPAQENQSSPADS. The segment covering 238-248 has biased composition (polar residues); that stretch reads AQENQSSPADS.

It belongs to the GrpE family. In terms of assembly, homodimer.

Its subcellular location is the cytoplasm. In terms of biological role, participates actively in the response to hyperosmotic and heat shock by preventing the aggregation of stress-denatured proteins, in association with DnaK and GrpE. It is the nucleotide exchange factor for DnaK and may function as a thermosensor. Unfolded proteins bind initially to DnaJ; upon interaction with the DnaJ-bound protein, DnaK hydrolyzes its bound ATP, resulting in the formation of a stable complex. GrpE releases ADP from DnaK; ATP binding to DnaK triggers the release of the substrate protein, thus completing the reaction cycle. Several rounds of ATP-dependent interactions between DnaJ, DnaK and GrpE are required for fully efficient folding. This chain is Protein GrpE, found in Nostoc sp. (strain PCC 7120 / SAG 25.82 / UTEX 2576).